The chain runs to 257 residues: 3-deoxy-manno-octulosonate cytidylyltransferase (257 aa).

This sequence belongs to the KdsB family.

Its subcellular location is the cytoplasm. The catalysed reaction is 3-deoxy-alpha-D-manno-oct-2-ulosonate + CTP = CMP-3-deoxy-beta-D-manno-octulosonate + diphosphate. Its pathway is nucleotide-sugar biosynthesis; CMP-3-deoxy-D-manno-octulosonate biosynthesis; CMP-3-deoxy-D-manno-octulosonate from 3-deoxy-D-manno-octulosonate and CTP: step 1/1. It participates in bacterial outer membrane biogenesis; lipopolysaccharide biosynthesis. Activates KDO (a required 8-carbon sugar) for incorporation into bacterial lipopolysaccharide in Gram-negative bacteria. The protein is 3-deoxy-manno-octulosonate cytidylyltransferase of Xylella fastidiosa (strain M12).